The sequence spans 267 residues: Strigolactone esterase D14 (267 aa).

Ser97 serves as the catalytic Nucleophile. Catalysis depends on residues Asp218 and His247.

It belongs to the AB hydrolase superfamily. As to quaternary structure, interacts with SMXL6, SMXL7 and SMXL8. The interaction with SMXLs occurs in the presence of (2'R) stereoisomers of strigolactones, but not (2'S) stereoisomers. Interacts with MAX2. Forms a complex with MAX2 and SKP1A/ASK1 in presence of strigolactone. As to expression, expressed at high levels in rosette and cauline leaves and at lower levels in axillary buds, inflorescences, stems, roots and developing vascular tissue of cotyledons.

The protein localises to the cytoplasm. The protein resides in the nucleus. Functionally, involved in strigolactone signaling pathway. Does not move long distances acropetally in the plant to regulate shoot branching and is rapidly degraded in the presence of strigolactones. Functions downstream of strigolactone synthesis, as a component of hormone signaling and as an enzyme that participates in the conversion of strigolactones to the bioactive form. Acts probably as a strigolactone receptor. Strigolactones are hormones that inhibit tillering and shoot branching through the MAX-dependent pathway, contribute to the regulation of shoot architectural response to phosphate-limiting conditions and function as rhizosphere signal that stimulates hyphal branching of arbuscular mycorrhizal fungi and trigger seed germination of root parasitic weeds. Hydrolyzes methyl carlactonoate (MeCLA), but not carlactone (CL) or carlactonoic acid (CLA). Hydrolyzes the butenolide ring of strigolactones. The initial nucleophilic attack causes an electron shift, followed by the addition of a water molecule, to lead to the release of the ABC ring product and the formation of a 'Ser-97'-stabilized open lactone intermediate. Has no esterase activity for 4-nitrophenyl butyrate. Binds and hydrolyzes the synthetic strigolactone analog GR24 in vitro. Forms a stable covalent complex with the D-ring of strigolactone, which is essential for hormone bioactivity. The D-ring is attached to His-247 of the catalytic triad. The hydrolysis of strigolactone into a covalently linked intermediate molecule initiates a conformational change of D14 to facilitate interaction with MAX2 and formation of the D14-MAX2-SKP1/ASK1 complex to trigger strigolactone signaling. This mechanism defines D14 as a non-canonical hormone receptor with dual functions to generate and sense the active form of strigolactone. This chain is Strigolactone esterase D14, found in Arabidopsis thaliana (Mouse-ear cress).